The primary structure comprises 333 residues: Chlorophyllide reductase 35.5 kDa chain (333 aa).

Residues 1-22 (MTDAPNLKGFDARLREEAAEEP) are disordered. Residues 45–50 (GSGKSF) and lysine 74 each bind ATP. Serine 49 is a binding site for Mg(2+). [4Fe-4S] cluster contacts are provided by cysteine 130 and cysteine 165. 219 to 220 (NK) provides a ligand contact to ATP.

Belongs to the NifH/BchL/ChlL family. Homodimer. Chlorophyllide reductase is composed of three subunits; BchX, BchY and BchZ. It depends on [4Fe-4S] cluster as a cofactor.

It catalyses the reaction 3-deacetyl-3-vinylbacteriochlorophyllide a + 2 oxidized [2Fe-2S]-[ferredoxin] + ADP + phosphate = chlorophyllide a + 2 reduced [2Fe-2S]-[ferredoxin] + ATP + H2O + H(+). The catalysed reaction is bacteriochlorophyllide a + 2 oxidized [2Fe-2S]-[ferredoxin] + ADP + phosphate = 3-acetyl-3-devinylchlorophyllide a + 2 reduced [2Fe-2S]-[ferredoxin] + ATP + H2O + H(+). It carries out the reaction 3-deacetyl-3-(1-hydroxyethyl)bacteriochlorophyllide a + 2 oxidized [2Fe-2S]-[ferredoxin] + ADP + phosphate = 3-devinyl-3-(1-hydroxyethyl)chlorophyllide a + 2 reduced [2Fe-2S]-[ferredoxin] + ATP + H2O + H(+). The protein operates within porphyrin-containing compound metabolism; bacteriochlorophyll biosynthesis. Converts chlorophylls (Chl) into bacteriochlorophylls (BChl) by reducing ring B of the tetrapyrrole. The chain is Chlorophyllide reductase 35.5 kDa chain (bchX) from Rhodobacter capsulatus (strain ATCC BAA-309 / NBRC 16581 / SB1003).